Reading from the N-terminus, the 138-residue chain is Small ribosomal subunit protein uS11c (138 aa).

The tract at residues 1 to 23 (MAKPIQRIGSRRNGPIGSRKNGR) is disordered.

Belongs to the universal ribosomal protein uS11 family. Part of the 30S ribosomal subunit.

The protein resides in the plastid. Its subcellular location is the chloroplast. This is Small ribosomal subunit protein uS11c from Platanus occidentalis (Sycamore).